The sequence spans 151 residues: S-protein homolog 27 (151 aa).

Residues Asn-91 and Asn-123 are each glycosylated (N-linked (GlcNAc...) asparagine).

It belongs to the plant self-incompatibility (S1) protein family.

It localises to the secreted. In Arabidopsis thaliana (Mouse-ear cress), this protein is S-protein homolog 27.